Reading from the N-terminus, the 160-residue chain is Cyclic pyranopterin monophosphate synthase (160 aa).

Substrate is bound by residues 76 to 78 (LCH) and 114 to 115 (ME). Asp129 is a catalytic residue.

Belongs to the MoaC family. Homohexamer; trimer of dimers.

It catalyses the reaction (8S)-3',8-cyclo-7,8-dihydroguanosine 5'-triphosphate = cyclic pyranopterin phosphate + diphosphate. Its pathway is cofactor biosynthesis; molybdopterin biosynthesis. In terms of biological role, catalyzes the conversion of (8S)-3',8-cyclo-7,8-dihydroguanosine 5'-triphosphate to cyclic pyranopterin monophosphate (cPMP). The protein is Cyclic pyranopterin monophosphate synthase of Mesorhizobium japonicum (strain LMG 29417 / CECT 9101 / MAFF 303099) (Mesorhizobium loti (strain MAFF 303099)).